We begin with the raw amino-acid sequence, 354 residues long: Guanine nucleotide-binding protein G(i) subunit alpha-1 (354 aa).

Residue Gly-2 is the site of N-myristoyl glycine attachment. The S-palmitoyl cysteine moiety is linked to residue Cys-3. A G-alpha domain is found at 32–354; sequence REVKLLLLGA…KNNLKDCGLF (323 aa). Residues 35–48 are G1 motif; it reads KLLLLGAGESGKST. GTP contacts are provided by residues 43-48, 150-151, and 175-178; these read ESGKST, DS, and LRTR. Ser-47 lines the Mg(2+) pocket. Residues 173-181 form a G2 motif region; the sequence is DVLRTRVKT. Residue Thr-181 participates in Mg(2+) binding. The tract at residues 196 to 205 is G3 motif; that stretch reads FKMFDVGGQR. GTP is bound by residues 200–204, 269–272, and Ala-326; these read DVGGQ and NKKD. Residues 265–272 form a G4 motif region; the sequence is ILFLNKKD. The interval 324–329 is G5 motif; sequence TCATDT.

Belongs to the G-alpha family. G(i/o/t/z) subfamily. In terms of assembly, heterotrimeric G proteins are composed of 3 units; alpha, beta and gamma. The alpha chain contains the guanine nucleotide binding site. Part of a spindle orientation complex at least composed of GNAI1, GPSM2 and NUMA1. Identified in complex with the beta subunit GNB1 and the gamma subunit GNG1. Identified in complex with the beta subunit GNB1 and the gamma subunit GNG2. Component of the TAS2R14-GNAI1 complex, consisting of TAS2R14, GNAI1, GNB1 and GNG2; within the complex interacts with TAS2R14; this complex plays a role in the perception of bitterness. GTP binding causes dissociation of the heterotrimer, liberating the individual subunits so that they can interact with downstream effector proteins. Interacts (GDP-bound form) with GPSM1; this inhibits guanine nucleotide exchange and GTP binding. Interacts (GDP-bound form) with GPSM2 (via GoLoco domains); this inhibits guanine nucleotide exchange. Interacts with RGS10; this strongly enhances GTP hydrolysis. Interacts with RGS1 and RGS16; this strongly enhances GTPase activity. Interacts with RGS4. Interacts with RGS12. Interacts (via active GTP- or inactive GDP-bound forms) with RGS14 (via RGS and GoLoco domains). Interacts with RGS3, RGS6, RGS7, RGS8, RGS17, RGS18 and RGS20 (in vitro). Interacts (GDP-bound form) with RIC8A (via C-terminus); promoting GNAI1 folding and association with the plasma membrane. Interacts (inactive GDP-bound form) with NUCB1 (via GBA motif); the interaction leads to activation of GNAI1. Interacts (inactive GDP-bound form) with CCDC88C/DAPLE (via GBA motif); the interaction leads to activation of GNAI1. Interacts (inactive GDP-bound form) with CCDC8A/GIV (via GBA motif). Interacts with GPR15. Myristoylation at Gly-2 is required for membrane anchoring before palmitoylation. Post-translationally, palmitoylation at Cys-3 varies with membrane lipid composition.

The protein resides in the nucleus. It is found in the cytoplasm. It localises to the cell membrane. The protein localises to the cytoskeleton. Its subcellular location is the microtubule organizing center. The protein resides in the centrosome. It is found in the cell cortex. It localises to the membrane. In terms of biological role, guanine nucleotide-binding proteins (G proteins) function as transducers downstream of G protein-coupled receptors (GPCRs) in numerous signaling cascades. The alpha chain contains the guanine nucleotide binding site and alternates between an active, GTP-bound state and an inactive, GDP-bound state. Signaling by an activated GPCR promotes GDP release and GTP binding. The alpha subunit has a low GTPase activity that converts bound GTP to GDP, thereby terminating the signal. Both GDP release and GTP hydrolysis are modulated by numerous regulatory proteins. Signaling is mediated via effector proteins, such as adenylate cyclase. Inhibits adenylate cyclase activity of ADCY1, ADCY5 and ADCY6, leading to decreased intracellular cAMP levels. The inactive GDP-bound form prevents the association of RGS14 with centrosomes and is required for the translocation of RGS14 from the cytoplasm to the plasma membrane. Required for normal cytokinesis during mitosis. Required for cortical dynein-dynactin complex recruitment during metaphase. This Pongo abelii (Sumatran orangutan) protein is Guanine nucleotide-binding protein G(i) subunit alpha-1 (GNAI1).